The chain runs to 357 residues: Probable dual-specificity RNA methyltransferase RlmN (357 aa).

Glutamate 95 functions as the Proton acceptor in the catalytic mechanism. One can recognise a Radical SAM core domain in the interval lysine 105 to aspartate 343. Cysteine 112 and cysteine 348 are disulfide-bonded. [4Fe-4S] cluster is bound by residues cysteine 119, cysteine 123, and cysteine 126. S-adenosyl-L-methionine contacts are provided by residues glycine 174–glutamate 175, serine 206, serine 229–histidine 231, and asparagine 305. Residue cysteine 348 is the S-methylcysteine intermediate of the active site.

This sequence belongs to the radical SAM superfamily. RlmN family. Requires [4Fe-4S] cluster as cofactor.

The protein resides in the cytoplasm. The catalysed reaction is adenosine(2503) in 23S rRNA + 2 reduced [2Fe-2S]-[ferredoxin] + 2 S-adenosyl-L-methionine = 2-methyladenosine(2503) in 23S rRNA + 5'-deoxyadenosine + L-methionine + 2 oxidized [2Fe-2S]-[ferredoxin] + S-adenosyl-L-homocysteine. It catalyses the reaction adenosine(37) in tRNA + 2 reduced [2Fe-2S]-[ferredoxin] + 2 S-adenosyl-L-methionine = 2-methyladenosine(37) in tRNA + 5'-deoxyadenosine + L-methionine + 2 oxidized [2Fe-2S]-[ferredoxin] + S-adenosyl-L-homocysteine. In terms of biological role, specifically methylates position 2 of adenine 2503 in 23S rRNA and position 2 of adenine 37 in tRNAs. The sequence is that of Probable dual-specificity RNA methyltransferase RlmN from Syntrophomonas wolfei subsp. wolfei (strain DSM 2245B / Goettingen).